We begin with the raw amino-acid sequence, 161 residues long: MPQVQSWFPVQKQPTLAVTFTPLPQLSHAHLPLPPSHLVTKTDAMFQHQLLPTQLQPFPPSHTPLLLLLTVTTMAVTPRLSLLNVLKKLQQPPFLQNHTLLLPLLTVTTTAVTPRLSLPRLPNKHHWPLAQSPSLLLQLLILLLPAPSLVLSFNPKVWLLV.

This is an uncharacterized protein from Saccharomyces cerevisiae (strain ATCC 204508 / S288c) (Baker's yeast).